The following is a 132-amino-acid chain: Fatty acid-binding protein, intestinal (132 aa).

An N-acetylalanine modification is found at Ala-2. Trp-83 and Arg-107 together coordinate hexadecanoate. Residues Trp-83 and Arg-107 each coordinate tetradecanoate.

This sequence belongs to the calycin superfamily. Fatty-acid binding protein (FABP) family.

The protein localises to the cytoplasm. In terms of biological role, FABPs are thought to play a role in the intracellular transport of long-chain fatty acids and their acyl-CoA esters. FABP2 is probably involved in triglyceride-rich lipoprotein synthesis. Binds saturated long-chain fatty acids with a high affinity, but binds with a lower affinity to unsaturated long-chain fatty acids. FABP2 may also help maintain energy homeostasis by functioning as a lipid sensor. The sequence is that of Fatty acid-binding protein, intestinal (FABP2) from Sus scrofa (Pig).